Consider the following 115-residue polypeptide: MKFVLLFGVLLVTLFSYSSAEMFDDFDQADEDELLSLIEKEEARAKECTPRFYDCSHDRHSCCRSELFKDVCTCFYPEGGDNEVCTCQQPKHLKYMEKAAGKAKKFGGKIKKWFG.

Residues 1-20 form the signal peptide; it reads MKFVLLFGVLLVTLFSYSSA. A propeptide spanning residues 21 to 44 is cleaved from the precursor; that stretch reads EMFDDFDQADEDELLSLIEKEEAR. Intrachain disulfides connect Cys-48–Cys-63, Cys-55–Cys-72, Cys-62–Cys-87, and Cys-74–Cys-85.

The protein belongs to the neurotoxin 19 (CSTX) family. 01 subfamily. As to expression, expressed by the venom gland.

The protein localises to the secreted. The protein is U3-lycotoxin-Ls1k of Lycosa singoriensis (Wolf spider).